The chain runs to 695 residues: Elongation factor G 1 (695 aa).

A tr-type G domain is found at 6–284; sequence SKVRNIGISA…AVETYLPCPT (279 aa). GTP contacts are provided by residues 15-22, 82-86, and 136-139; these read AHIDSGKT, DTPGH, and NKCD.

Belongs to the TRAFAC class translation factor GTPase superfamily. Classic translation factor GTPase family. EF-G/EF-2 subfamily.

It localises to the cytoplasm. Catalyzes the GTP-dependent ribosomal translocation step during translation elongation. During this step, the ribosome changes from the pre-translocational (PRE) to the post-translocational (POST) state as the newly formed A-site-bound peptidyl-tRNA and P-site-bound deacylated tRNA move to the P and E sites, respectively. Catalyzes the coordinated movement of the two tRNA molecules, the mRNA and conformational changes in the ribosome. The chain is Elongation factor G 1 from Desulfotalea psychrophila (strain LSv54 / DSM 12343).